Consider the following 469-residue polypeptide: Putative multidrug resistance protein MdtD (469 aa).

A run of 13 helical transmembrane segments spans residues 8–28 (LWIV…VNTA), 45–65 (SVIV…GWLA), 68–88 (VGVK…SLLC), 102–122 (VIQG…VMKI), 134–154 (FVTL…GFLV), 161–181 (WIFL…LWLM), 191–211 (FDIS…LALD), 215–235 (GLGL…LALA), 263–283 (LIGS…TPVF), 286–306 (IGLG…IIGS), 338–358 (LSFP…VLFF), 392–412 (MVMQ…LGVF), and 426–446 (SAFL…ALIF).

The protein belongs to the major facilitator superfamily. TCR/Tet family.

The protein resides in the cell inner membrane. The polypeptide is Putative multidrug resistance protein MdtD (Yersinia enterocolitica serotype O:8 / biotype 1B (strain NCTC 13174 / 8081)).